A 357-amino-acid chain; its full sequence is Phosphate acyltransferase (357 aa).

It belongs to the PlsX family. In terms of assembly, homodimer. Probably interacts with PlsY.

It localises to the cytoplasm. The catalysed reaction is a fatty acyl-[ACP] + phosphate = an acyl phosphate + holo-[ACP]. Its pathway is lipid metabolism; phospholipid metabolism. Functionally, catalyzes the reversible formation of acyl-phosphate (acyl-PO(4)) from acyl-[acyl-carrier-protein] (acyl-ACP). This enzyme utilizes acyl-ACP as fatty acyl donor, but not acyl-CoA. The sequence is that of Phosphate acyltransferase from Roseobacter denitrificans (strain ATCC 33942 / OCh 114) (Erythrobacter sp. (strain OCh 114)).